Consider the following 483-residue polypeptide: Aspartyl/glutamyl-tRNA(Asn/Gln) amidotransferase subunit B (483 aa).

It belongs to the GatB/GatE family. GatB subfamily. Heterotrimer of A, B and C subunits.

The enzyme catalyses L-glutamyl-tRNA(Gln) + L-glutamine + ATP + H2O = L-glutaminyl-tRNA(Gln) + L-glutamate + ADP + phosphate + H(+). It carries out the reaction L-aspartyl-tRNA(Asn) + L-glutamine + ATP + H2O = L-asparaginyl-tRNA(Asn) + L-glutamate + ADP + phosphate + 2 H(+). In terms of biological role, allows the formation of correctly charged Asn-tRNA(Asn) or Gln-tRNA(Gln) through the transamidation of misacylated Asp-tRNA(Asn) or Glu-tRNA(Gln) in organisms which lack either or both of asparaginyl-tRNA or glutaminyl-tRNA synthetases. The reaction takes place in the presence of glutamine and ATP through an activated phospho-Asp-tRNA(Asn) or phospho-Glu-tRNA(Gln). This chain is Aspartyl/glutamyl-tRNA(Asn/Gln) amidotransferase subunit B, found in Rickettsia rickettsii (strain Iowa).